The primary structure comprises 98 residues: Co-chaperonin GroES (98 aa).

The protein belongs to the GroES chaperonin family. In terms of assembly, heptamer of 7 subunits arranged in a ring. Interacts with the chaperonin GroEL.

The protein localises to the cytoplasm. In terms of biological role, together with the chaperonin GroEL, plays an essential role in assisting protein folding. The GroEL-GroES system forms a nano-cage that allows encapsulation of the non-native substrate proteins and provides a physical environment optimized to promote and accelerate protein folding. GroES binds to the apical surface of the GroEL ring, thereby capping the opening of the GroEL channel. This is Co-chaperonin GroES from Micrococcus luteus (strain ATCC 4698 / DSM 20030 / JCM 1464 / CCM 169 / CCUG 5858 / IAM 1056 / NBRC 3333 / NCIMB 9278 / NCTC 2665 / VKM Ac-2230) (Micrococcus lysodeikticus).